The chain runs to 203 residues: Ribosome-binding factor A (203 aa).

The span at 119 to 141 (LAEVRRDARPAGDEDPYRRPRTV) shows a compositional bias: basic and acidic residues. Positions 119–203 (LAEVRRDARP…SPGGDPTAGR (85 aa)) are disordered. The span at 142–169 (DEDDEDEDEDLVDEFDEFDRVEELDADA) shows a compositional bias: acidic residues.

It belongs to the RbfA family. Monomer. Binds 30S ribosomal subunits, but not 50S ribosomal subunits or 70S ribosomes.

Its subcellular location is the cytoplasm. Functionally, one of several proteins that assist in the late maturation steps of the functional core of the 30S ribosomal subunit. Associates with free 30S ribosomal subunits (but not with 30S subunits that are part of 70S ribosomes or polysomes). Required for efficient processing of 16S rRNA. May interact with the 5'-terminal helix region of 16S rRNA. This is Ribosome-binding factor A from Frankia alni (strain DSM 45986 / CECT 9034 / ACN14a).